Reading from the N-terminus, the 330-residue chain is Aspartate--ammonia ligase (330 aa).

This sequence belongs to the class-II aminoacyl-tRNA synthetase family. AsnA subfamily.

It localises to the cytoplasm. The catalysed reaction is L-aspartate + NH4(+) + ATP = L-asparagine + AMP + diphosphate + H(+). Its pathway is amino-acid biosynthesis; L-asparagine biosynthesis; L-asparagine from L-aspartate (ammonia route): step 1/1. The sequence is that of Aspartate--ammonia ligase from Escherichia coli O45:K1 (strain S88 / ExPEC).